Consider the following 314-residue polypeptide: Ribosomal RNA small subunit methyltransferase A (314 aa).

S-adenosyl-L-methionine contacts are provided by N29, V31, G56, E77, D107, and N126. The disordered stretch occupies residues 291–314 (PKADDAGDDADAQAKADGAQVSTL). The segment covering 303–314 (QAKADGAQVSTL) has biased composition (low complexity).

This sequence belongs to the class I-like SAM-binding methyltransferase superfamily. rRNA adenine N(6)-methyltransferase family. RsmA subfamily.

Its subcellular location is the cytoplasm. The enzyme catalyses adenosine(1518)/adenosine(1519) in 16S rRNA + 4 S-adenosyl-L-methionine = N(6)-dimethyladenosine(1518)/N(6)-dimethyladenosine(1519) in 16S rRNA + 4 S-adenosyl-L-homocysteine + 4 H(+). In terms of biological role, specifically dimethylates two adjacent adenosines (A1518 and A1519) in the loop of a conserved hairpin near the 3'-end of 16S rRNA in the 30S particle. May play a critical role in biogenesis of 30S subunits. The sequence is that of Ribosomal RNA small subunit methyltransferase A from Mycolicibacterium gilvum (strain PYR-GCK) (Mycobacterium gilvum (strain PYR-GCK)).